We begin with the raw amino-acid sequence, 416 residues long: Phosphatidylinositol 5-phosphate 4-kinase type-2 beta (416 aa).

Position 2 is an N-acetylserine (serine 2). Position 8 is a phosphothreonine (threonine 8). Serine 19 carries the phosphoserine modification. The 378-residue stretch at alanine 38–leucine 415 folds into the PIPK domain. A required for interaction with PIP5K1A region spans residues valine 64–aspartate 70. 2 positions are modified to N6-acetyllysine: lysine 94 and lysine 150. Residues arginine 202–valine 204 and lysine 214 contribute to the ATP site. Residues asparagine 203–valine 204 and lysine 214 each bind GTP. At threonine 322 the chain carries Phosphothreonine. Position 326 is a phosphoserine (serine 326). A GTP-binding site is contributed by aspartate 369.

In terms of assembly, homodimer. Binds TNFRSF1A. Interacts with PIP4K2A; the interaction suppresses ubiquitination by the SPOP/CUL3 complex. Probably interacts with PIP5K1A; the interaction inhibits PIP5K1A kinase activity. Ubiquitinated by the SPOP/CUL3 complex. Ubiquitination is stimulated by PtdIns5P levels. In terms of processing, phosphorylated on serine residues.

The protein localises to the endoplasmic reticulum membrane. It is found in the cell membrane. It localises to the nucleus. Its subcellular location is the cytoplasm. It catalyses the reaction a 1,2-diacyl-sn-glycero-3-phospho-(1D-myo-inositol-5-phosphate) + ATP = a 1,2-diacyl-sn-glycero-3-phospho-(1D-myo-inositol-4,5-bisphosphate) + ADP + H(+). The catalysed reaction is 1,2-dihexadecanoyl-sn-glycero-3-phospho-(1D-myo-inositol-5-phosphate) + ATP = 1,2-dihexadecanoyl-sn-glycero-3-phospho-(1D-myo-inositol-4,5-bisphosphate) + ADP + H(+). The enzyme catalyses 1,2-dihexadecanoyl-sn-glycero-3-phospho-(1D-myo-inositol-5-phosphate) + GTP = 1,2-dihexadecanoyl-sn-glycero-3-phospho-(1D-myo-inositol-4,5-bisphosphate) + GDP + H(+). Its function is as follows. Participates in the biosynthesis of phosphatidylinositol 4,5-bisphosphate. Preferentially utilizes GTP, rather than ATP, for PI(5)P phosphorylation and its activity reflects changes in direct proportion to the physiological GTP concentration. Its GTP-sensing activity is critical for metabolic adaptation. PIP4Ks negatively regulate insulin signaling through a catalytic-independent mechanism. They interact with PIP5Ks and suppress PIP5K-mediated PtdIns(4,5)P2 synthesis and insulin-dependent conversion to PtdIns(3,4,5)P3. The chain is Phosphatidylinositol 5-phosphate 4-kinase type-2 beta from Rattus norvegicus (Rat).